We begin with the raw amino-acid sequence, 280 residues long: Pantothenate synthetase (280 aa).

Residue 26 to 33 (MGNLHDGH) participates in ATP binding. H33 acts as the Proton donor in catalysis. Q57 provides a ligand contact to (R)-pantoate. Q57 is a binding site for beta-alanine. 147–150 (GKKD) contacts ATP. Q153 is a (R)-pantoate binding site. Residue 184–187 (LSSR) coordinates ATP.

The protein belongs to the pantothenate synthetase family. In terms of assembly, homodimer.

Its subcellular location is the cytoplasm. It catalyses the reaction (R)-pantoate + beta-alanine + ATP = (R)-pantothenate + AMP + diphosphate + H(+). Its pathway is cofactor biosynthesis; (R)-pantothenate biosynthesis; (R)-pantothenate from (R)-pantoate and beta-alanine: step 1/1. Functionally, catalyzes the condensation of pantoate with beta-alanine in an ATP-dependent reaction via a pantoyl-adenylate intermediate. This is Pantothenate synthetase from Verminephrobacter eiseniae (strain EF01-2).